A 117-amino-acid chain; its full sequence is NADH-ubiquinone oxidoreductase chain 3 (117 aa).

The next 3 helical transmembrane spans lie at 4-24 (FLGI…LLGL), 61-81 (LVAI…PWAL), and 86-106 (IGYF…VGFI).

Belongs to the complex I subunit 3 family.

It localises to the mitochondrion membrane. The enzyme catalyses a ubiquinone + NADH + 5 H(+)(in) = a ubiquinol + NAD(+) + 4 H(+)(out). Functionally, core subunit of the mitochondrial membrane respiratory chain NADH dehydrogenase (Complex I) that is believed to belong to the minimal assembly required for catalysis. Complex I functions in the transfer of electrons from NADH to the respiratory chain. The immediate electron acceptor for the enzyme is believed to be ubiquinone. The protein is NADH-ubiquinone oxidoreductase chain 3 (NAD3) of Prototheca wickerhamii.